The following is a 191-amino-acid chain: Elongation factor P (191 aa).

Lysine 34 carries the N6-(3,6-diaminohexanoyl)-5-hydroxylysine modification.

It belongs to the elongation factor P family. In terms of processing, may be beta-lysylated on the epsilon-amino group of Lys-34 by the combined action of EpmA and EpmB, and then hydroxylated on the C5 position of the same residue by EpmC (if this protein is present). Lysylation is critical for the stimulatory effect of EF-P on peptide-bond formation. The lysylation moiety may extend toward the peptidyltransferase center and stabilize the terminal 3-CCA end of the tRNA. Hydroxylation of the C5 position on Lys-34 may allow additional potential stabilizing hydrogen-bond interactions with the P-tRNA.

The protein localises to the cytoplasm. The protein operates within protein biosynthesis; polypeptide chain elongation. Functionally, involved in peptide bond synthesis. Alleviates ribosome stalling that occurs when 3 or more consecutive Pro residues or the sequence PPG is present in a protein, possibly by augmenting the peptidyl transferase activity of the ribosome. Modification of Lys-34 is required for alleviation. This is Elongation factor P from Psychrobacter sp. (strain PRwf-1).